Consider the following 105-residue polypeptide: DNA-directed RNA polymerase subunit omega (105 aa).

Belongs to the RNA polymerase subunit omega family. As to quaternary structure, the RNAP catalytic core consists of 2 alpha, 1 beta, 1 beta' and 1 omega subunit. When a sigma factor is associated with the core the holoenzyme is formed, which can initiate transcription.

It catalyses the reaction RNA(n) + a ribonucleoside 5'-triphosphate = RNA(n+1) + diphosphate. Functionally, promotes RNA polymerase assembly. Latches the N- and C-terminal regions of the beta' subunit thereby facilitating its interaction with the beta and alpha subunits. This is DNA-directed RNA polymerase subunit omega from Streptococcus uberis (strain ATCC BAA-854 / 0140J).